Here is an 84-residue protein sequence, read N- to C-terminus: Acid stress protein IbaG (84 aa).

The protein belongs to the BolA/IbaG family.

In terms of biological role, involved in cell resistance against acid stress. In Escherichia coli O6:H1 (strain CFT073 / ATCC 700928 / UPEC), this protein is Acid stress protein IbaG.